Here is a 105-residue protein sequence, read N- to C-terminus: Urease subunit beta (105 aa).

The protein belongs to the urease beta subunit family. In terms of assembly, heterotrimer of UreA (gamma), UreB (beta) and UreC (alpha) subunits. Three heterotrimers associate to form the active enzyme.

The protein resides in the cytoplasm. The enzyme catalyses urea + 2 H2O + H(+) = hydrogencarbonate + 2 NH4(+). It functions in the pathway nitrogen metabolism; urea degradation; CO(2) and NH(3) from urea (urease route): step 1/1. The protein is Urease subunit beta of Pseudomonas putida (strain W619).